A 1735-amino-acid polypeptide reads, in one-letter code: Cadherin-AgCad1 (1735 aa).

A signal peptide spans 1–30; sequence MKCVASKFNMWLHLGWLLGLLLVLLPLVRC. Residues 31 to 1574 lie on the Extracellular side of the membrane; sequence QGWGEPRFET…ALTEADETLQ (1544 aa). An extracellular domain (EC) region spans residues 166–1456; it reads VTDCLFNVYH…KVYIVSESNR (1291 aa). Cadherin domains lie at 171–273, 280–378, 379–498, 499–620, 621–757, 767–866, 879–983, 985–1109, 1136–1235, 1255–1350, and 1351–1461; these read FNVY…PPIF, ERIM…IPEI, YMKP…VPKF, GRDE…PPQI, TLPR…APYF, SVKE…QPYH, EKIP…TPKL, ELAA…TPSI, GSPL…EPTF, AEDP…PPVF, and QQRL…TFVF. Short sequence motifs (toxin-binding receptor motif) lie at residues 1344 to 1350 and 1446 to 1456; these read NDNPPVF and AKVYIVSESNR. A CR11-MPED, increases toxicity of activated Cry4B toxin, peptide alone is not toxic region spans residues 1358–1569; the sequence is GITTNDRVPK…PLATEALTEA (212 aa). A membrane-proximal EC domain (MPED) region spans residues 1457–1569; the sequence is VTFVFLNSVE…PLATEALTEA (113 aa). The chain crosses the membrane as a helical span at residues 1575-1595; it reads IILIVVSAALAVLCVILFVAF. Over 1596 to 1735 the chain is Cytoplasmic; that stretch reads FIKIRSLNRQ…ETDDELSHRF (140 aa). A compositionally biased stretch (polar residues) spans 1701–1719; the sequence is SLNPMANGTDKSNDGAPTS. A disordered region spans residues 1701 to 1735; that stretch reads SLNPMANGTDKSNDGAPTSNHKKLDETDDELSHRF. The span at 1722 to 1735 shows a compositional bias: basic and acidic residues; that stretch reads KKLDETDDELSHRF.

Larval midgut (at protein level).

It is found in the apical cell membrane. The protein resides in the cell projection. The protein localises to the microvillus membrane. Functionally, cadherins are calcium-dependent cell adhesion proteins. They preferentially interact with themselves in a homophilic manner in connecting cells. In terms of biological role, (Microbial infection) Binds to and is probably the functional receptor for B.thuringiensis subsp. israelensis (Bti) insecticidal toxin Cry4B. Trichoplusia ni insect cells stably transfected with this protein become suspectible to Cry4B; cells undergo oncosis, they bleb and ruffle after 20-40 minutes, swell after 40-60 minutes and lyse after 90 minutes. Following toxin treatment in the T.in insect system levels of intracellular 3',5'-cyclic AMP (cAMP) rise 12.5-fold; EDTA but not EGTA pretreatment prevents cAMP increase. Inorganic phosphate also rises 3.4-fold after toxin treatment. The protein is Cadherin-AgCad1 of Anopheles gambiae (African malaria mosquito).